Here is a 134-residue protein sequence, read N- to C-terminus: ATP synthase epsilon chain, chloroplastic (134 aa).

Belongs to the ATPase epsilon chain family. F-type ATPases have 2 components, CF(1) - the catalytic core - and CF(0) - the membrane proton channel. CF(1) has five subunits: alpha(3), beta(3), gamma(1), delta(1), epsilon(1). CF(0) has three main subunits: a, b and c.

It localises to the plastid. It is found in the chloroplast thylakoid membrane. Its function is as follows. Produces ATP from ADP in the presence of a proton gradient across the membrane. The polypeptide is ATP synthase epsilon chain, chloroplastic (Gracilaria tenuistipitata var. liui (Red alga)).